A 565-amino-acid polypeptide reads, in one-letter code: E3 ubiquitin-protein ligase ipaH7.8 (565 aa).

A disordered region spans residues 1 to 22 (MFSVNNTHSSVSCSPSINSNST). The interval 1–262 (MFSVNNTHSS…YHGPQIYFSM (262 aa)) is interaction with target proteins. Over residues 9 to 22 (SSVSCSPSINSNST) the composition is skewed to low complexity. LRR repeat units lie at residues 58-79 (QEAV…PKHI), 80-97 (SALI…KLPA), 98-119 (FLKE…PESL), 120-137 (TTLS…VLPN), 138-157 (HLTS…ALPE), 158-179 (KLKF…PDKL), 180-199 (EILC…SDRN), 202-223 (RQKE…FSQL), and 225-248 (SSYR…QRLT). Residues 263–270 (SDGQQNTL) form a linker region. Positions 271 to 565 (HRPLADAVTA…SENGSRLHHS (295 aa)) are E3 ubiquitin-protein ligase catalytic domain. Residues 273–565 (PLADAVTAWF…SENGSRLHHS (293 aa)) enclose the NEL domain. C357 acts as the Glycyl thioester intermediate in catalysis.

This sequence belongs to the LRR-containing bacterial E3 ligase family. Ubiquitinated in the presence of host E1 ubiquitin-activating enzyme, E2 ubiquitin-conjugating enzyme and ubiquitin.

Its subcellular location is the secreted. It localises to the host cytoplasm. It catalyses the reaction S-ubiquitinyl-[E2 ubiquitin-conjugating enzyme]-L-cysteine + [acceptor protein]-L-lysine = [E2 ubiquitin-conjugating enzyme]-L-cysteine + N(6)-ubiquitinyl-[acceptor protein]-L-lysine.. It functions in the pathway protein modification; protein ubiquitination. E3 ubiquitin ligase effector protein that interferes with host's innate immunity. Functions to alter host cell physiology and promote bacterial survival in host tissues. Catalyzes ubiquitination of human gasdermins GSDMB and GSDMD, promoting their degradation by the proteasome, thereby preventing cell death. In contrast, activates host cell pyroptosis in mouse cells: catalyzes ubiquitination of mouse Nlrp1b allele 1 protein, releasing the cleaved C-terminal part of Nlrp1b, which polymerizes and forms the Nlrp1b inflammasome followed by host cell pyroptosis. Does not catalyze ubiquitination of mouse GSDMD. This is E3 ubiquitin-protein ligase ipaH7.8 from Shigella flexneri.